A 248-amino-acid chain; its full sequence is tRNA uridine(34) hydroxylase (248 aa).

Residues 128–222 (EGRPVVMLDT…YFEEVGGAHY (95 aa)) form the Rhodanese domain. Catalysis depends on C182, which acts as the Cysteine persulfide intermediate.

This sequence belongs to the TrhO family.

It carries out the reaction uridine(34) in tRNA + AH2 + O2 = 5-hydroxyuridine(34) in tRNA + A + H2O. Its function is as follows. Catalyzes oxygen-dependent 5-hydroxyuridine (ho5U) modification at position 34 in tRNAs. In Thiobacillus denitrificans (strain ATCC 25259 / T1), this protein is tRNA uridine(34) hydroxylase.